The following is a 491-amino-acid chain: Aspartyl/glutamyl-tRNA(Asn/Gln) amidotransferase subunit B (491 aa).

The protein belongs to the GatB/GatE family. GatB subfamily. Heterotrimer of A, B and C subunits.

It carries out the reaction L-glutamyl-tRNA(Gln) + L-glutamine + ATP + H2O = L-glutaminyl-tRNA(Gln) + L-glutamate + ADP + phosphate + H(+). It catalyses the reaction L-aspartyl-tRNA(Asn) + L-glutamine + ATP + H2O = L-asparaginyl-tRNA(Asn) + L-glutamate + ADP + phosphate + 2 H(+). Its function is as follows. Allows the formation of correctly charged Asn-tRNA(Asn) or Gln-tRNA(Gln) through the transamidation of misacylated Asp-tRNA(Asn) or Glu-tRNA(Gln) in organisms which lack either or both of asparaginyl-tRNA or glutaminyl-tRNA synthetases. The reaction takes place in the presence of glutamine and ATP through an activated phospho-Asp-tRNA(Asn) or phospho-Glu-tRNA(Gln). The protein is Aspartyl/glutamyl-tRNA(Asn/Gln) amidotransferase subunit B of Nostoc sp. (strain PCC 7120 / SAG 25.82 / UTEX 2576).